The following is a 656-amino-acid chain: MHWNIISKEQSSSSVSLPTLDSSEPCHIEVILRAIPEKGLQNNESTFKIDPYENTVLFRTNNPLHETTKETHSTFQFDKVFDANATQEDVQKFLVHPIINDVLNGYNGTVITYGPSFSGKSYSLIGSKESEGILPNICKTLFDTLEKNEETKGDSFSVSVLAFEIYMEKTYDLLVPLPERKPLKLHRSSSKMDLEIKDICPAHVGSYEDLRSYIQAVQNVGNRMACGDKTERSRSHLVFQLHVEQRNRKDDILKNSSLYLVDLHGAEKFDKRTESTLSQDALKKLNQSIEALKNTVRSLSMKERDSAYSAKGSHSSAYRESQLTEVLKDSLGGNRKTKVILTCFLSNVPTTLSTLEFGDSIRQINNKVTDNTTGLNLKKKMDLFIQDMKIKDDNYVAQINILKAEIDSLKSLHNKSLPEDDEKKMLENTKKENIKLKLQLDSITQLLSSSTNEDPNNRIDEEVSEILTKRCEQIAQLELSFDRQMNSNSKLQQELEYKKSKEEALESMNVRLLEQIQLQEREIQELLTTNAILKGELETHTKLTETRSERIKSLESSVKELSLNKSAIPSPRRGSMSSSSGNTMLHIEEGSEISNSPWSANTSSKPLVWGARKVSSSSIATTGSQESFVARPFKKGLNLHSIKVTSSTPKSPSSGS.

In terms of domain architecture, Kinesin motor spans 27–364 (HIEVILRAIP…LEFGDSIRQI (338 aa)). Residue 114 to 121 (GPSFSGKS) participates in ATP binding. Residue Thr583 is modified to Phosphothreonine.

The protein belongs to the TRAFAC class myosin-kinesin ATPase superfamily. Kinesin family.

Its subcellular location is the cytoplasm. The protein resides in the cytoskeleton. Its function is as follows. Possible microtubule-based motor that can interact or substitute with myosin 2 (MYO2). This is Kinesin-related protein SMY1 (SMY1) from Saccharomyces cerevisiae (strain ATCC 204508 / S288c) (Baker's yeast).